The chain runs to 1054 residues: Reverse gyrase (1054 aa).

The RG N-terminal-type zinc-finger motif lies at 1-43 (MIPVVYSNLCPVCGGDLESKEIEKHVCFRKKRSLCLFPEDFLL). Residues Cys10, Cys13, Cys27, and Cys35 each contribute to the Zn(2+) site. Residues Cys35 and Cys650 are joined by a disulfide bond. The ATP site is built by Gln61, Lys84, Thr85, and Ser86. Residues 65–245 (AKRILRKESF…FRQLLNFDIG (181 aa)) form the Helicase ATP-binding domain. Residues 182–185 (DDVD) carry the DEAD box motif. The interval 352–427 (PSFRVTIEDI…EGEVIFPDLR (76 aa)) is latch region. Residues 502–1054 (DLIKPALFIV…DLYAEIKSID (553 aa)) are topoisomerase I. Residues 506–662 (PALFIVESPT…VKRAEFHEVT (157 aa)) enclose the Toprim domain. Residue Glu512 coordinates Mg(2+). The RG C-terminal-type zinc finger occupies 581-609 (IKRCRDCGYQFTEDRESCPKCGSENVDNS). Zn(2+) is bound by residues Cys584, Cys587, Cys598, and Cys601. Residue Asp631 coordinates Mg(2+). The 378-residue stretch at 677–1054 (DENLVKAQVV…DLYAEIKSID (378 aa)) folds into the Topo IA-type catalytic domain. Catalysis depends on Tyr809, which acts as the O-(5'-phospho-DNA)-tyrosine intermediate.

It in the N-terminal section; belongs to the DEAD box helicase family. DDVD subfamily. The protein in the C-terminal section; belongs to the type IA topoisomerase family. In terms of assembly, monomer. Zn(2+) is required as a cofactor. The cofactor is Mg(2+).

The protein resides in the cytoplasm. The enzyme catalyses ATP + H2O = ADP + phosphate + H(+). Functionally, modifies the topological state of DNA by introducing positive supercoils in an ATP-dependent process, increasing the linking number in steps of +1. Very efficient supercoiling occurs on relaxed DNA with a single-stranded bubble; the minimal bubble is 20 nucleotides (nt) and up to 10 positive supercoils can be introduced into a 3.1 kb plasmid with a 50 nt bubble. Positively supercoils DNA with all (d)NTPS, although it requires about 10-fold more of non-(d)ATP. In the absence of ATP (or at low levels of enzyme), or in the presence of ADP, relaxes negative supercoils. Only relaxes positive supercoils when the substrate contains a bubble. Also promotes strand annealing of complementary ssDNA circles. Binds to single-stranded DNA, transiently cleaves and then rejoins the ends, introducing a positive supercoil in the process. The scissile phosphodiester is attacked by the catalytic tyrosine of the enzyme, resulting in the formation of a DNA-(5'-phosphotyrosyl)-enzyme intermediate. Probably involved in rewinding DNA strands in regions of the chromosome that have opened up to allow replication, transcription, DNA repair and/or for DNA protection. In vitro protects DNA against degradation at 90 degrees Celsius, reducing dsDNA breakage about 8-fold; ATP hydrolysis is not necessary, while ADP decreases the protection somewhat. Coats all forms of dsDNA; the DNA is protected against cleavage and transcription. Recognizes nicked DNA and forms a coat at the nicking site, which may help hold DNA in a structure amenable to repair. In Archaeoglobus fulgidus (strain ATCC 49558 / DSM 4304 / JCM 9628 / NBRC 100126 / VC-16), this protein is Reverse gyrase.